Reading from the N-terminus, the 216-residue chain is Uracil-DNA glycosylase (216 aa).

The active-site Proton acceptor is the D59.

Belongs to the uracil-DNA glycosylase (UDG) superfamily. UNG family.

It is found in the cytoplasm. The catalysed reaction is Hydrolyzes single-stranded DNA or mismatched double-stranded DNA and polynucleotides, releasing free uracil.. In terms of biological role, excises uracil residues from the DNA which can arise as a result of misincorporation of dUMP residues by DNA polymerase or due to deamination of cytosine. The chain is Uracil-DNA glycosylase from Idiomarina loihiensis (strain ATCC BAA-735 / DSM 15497 / L2-TR).